The primary structure comprises 377 residues: Lipoyl synthase, mitochondrial (377 aa).

A mitochondrion-targeting transit peptide spans 1–77 (MFRRGGRILN…LPNGSVHKRL (77 aa)). Positions 107, 112, 118, 138, 142, 145, and 353 each coordinate [4Fe-4S] cluster. In terms of domain architecture, Radical SAM core spans 123–342 (DKTRATATIM…RKRAEELGFL (220 aa)).

Belongs to the radical SAM superfamily. Lipoyl synthase family. [4Fe-4S] cluster is required as a cofactor.

Its subcellular location is the mitochondrion. It catalyses the reaction [[Fe-S] cluster scaffold protein carrying a second [4Fe-4S](2+) cluster] + N(6)-octanoyl-L-lysyl-[protein] + 2 oxidized [2Fe-2S]-[ferredoxin] + 2 S-adenosyl-L-methionine + 4 H(+) = [[Fe-S] cluster scaffold protein] + N(6)-[(R)-dihydrolipoyl]-L-lysyl-[protein] + 4 Fe(3+) + 2 hydrogen sulfide + 2 5'-deoxyadenosine + 2 L-methionine + 2 reduced [2Fe-2S]-[ferredoxin]. It functions in the pathway protein modification; protein lipoylation via endogenous pathway; protein N(6)-(lipoyl)lysine from octanoyl-[acyl-carrier-protein]: step 2/2. Its function is as follows. Catalyzes the radical-mediated insertion of two sulfur atoms into the C-6 and C-8 positions of the octanoyl moiety bound to the lipoyl domains of lipoate-dependent enzymes, thereby converting the octanoylated domains into lipoylated derivatives. This is Lipoyl synthase, mitochondrial from Schizosaccharomyces japonicus (strain yFS275 / FY16936) (Fission yeast).